The following is a 295-amino-acid chain: Phosphatidylglycerol--prolipoprotein diacylglyceryl transferase (295 aa).

Helical transmembrane passes span 17–37 (IKVH…WLLG), 57–77 (LLFY…MLFY), 92–112 (VWDG…ACWW), 127–147 (FMAP…FIGA), 196–216 (QLYE…AVSA), 222–242 (YLVG…VEFV), and 255–275 (WLTR…VLLV). Arg140 contributes to the a 1,2-diacyl-sn-glycero-3-phospho-(1'-sn-glycerol) binding site.

Belongs to the Lgt family.

It localises to the cell inner membrane. The enzyme catalyses L-cysteinyl-[prolipoprotein] + a 1,2-diacyl-sn-glycero-3-phospho-(1'-sn-glycerol) = an S-1,2-diacyl-sn-glyceryl-L-cysteinyl-[prolipoprotein] + sn-glycerol 1-phosphate + H(+). It participates in protein modification; lipoprotein biosynthesis (diacylglyceryl transfer). In terms of biological role, catalyzes the transfer of the diacylglyceryl group from phosphatidylglycerol to the sulfhydryl group of the N-terminal cysteine of a prolipoprotein, the first step in the formation of mature lipoproteins. This chain is Phosphatidylglycerol--prolipoprotein diacylglyceryl transferase, found in Stenotrophomonas maltophilia (strain R551-3).